A 105-amino-acid chain; its full sequence is Large ribosomal subunit protein uL24 (105 aa).

It belongs to the universal ribosomal protein uL24 family. As to quaternary structure, part of the 50S ribosomal subunit.

One of two assembly initiator proteins, it binds directly to the 5'-end of the 23S rRNA, where it nucleates assembly of the 50S subunit. Functionally, one of the proteins that surrounds the polypeptide exit tunnel on the outside of the subunit. The chain is Large ribosomal subunit protein uL24 from Saccharophagus degradans (strain 2-40 / ATCC 43961 / DSM 17024).